A 119-amino-acid chain; its full sequence is Large ribosomal subunit protein bL20 (119 aa).

It belongs to the bacterial ribosomal protein bL20 family.

Functionally, binds directly to 23S ribosomal RNA and is necessary for the in vitro assembly process of the 50S ribosomal subunit. It is not involved in the protein synthesizing functions of that subunit. In Polaromonas sp. (strain JS666 / ATCC BAA-500), this protein is Large ribosomal subunit protein bL20.